The following is a 212-amino-acid chain: N-(5'-phosphoribosyl)anthranilate isomerase (212 aa).

The protein belongs to the TrpF family.

The catalysed reaction is N-(5-phospho-beta-D-ribosyl)anthranilate = 1-(2-carboxyphenylamino)-1-deoxy-D-ribulose 5-phosphate. The protein operates within amino-acid biosynthesis; L-tryptophan biosynthesis; L-tryptophan from chorismate: step 3/5. The protein is N-(5'-phosphoribosyl)anthranilate isomerase of Roseiflexus castenholzii (strain DSM 13941 / HLO8).